The sequence spans 91 residues: Mercuric transport protein periplasmic component (91 aa).

Positions Met1 to Ala19 are cleaved as a signal peptide. The region spanning Gln22–Ser88 is the HMA domain. Hg(2+) is bound by residues Cys33 and Cys36.

Belongs to the MerP family. As to quaternary structure, monomer.

It is found in the periplasm. Involved in mercury resistance. Acts as a mercury scavenger that specifically binds to a mercuric ion in the periplasm and probably passes it to the cytoplasmic mercuric reductase MerA via the mercuric transport protein MerT. In Acinetobacter calcoaceticus, this protein is Mercuric transport protein periplasmic component.